The chain runs to 542 residues: uncharacterized protein (542 aa).

5 helical membrane passes run 4-23, 28-47, 51-70, 91-113, and 160-182; these read FVEN…LLLG, FGFR…FSTI, ITVP…YTIG, LALG…LGLA, and YSLT…GGLF. 2 consecutive RCK C-terminal domains span residues 190-272 and 274-355; these read AKNA…LLGE and VDGH…IFGD. 5 helical membrane-spanning segments follow: residues 363-385, 390-412, 425-447, 457-479, and 519-541; these read FNLV…EFPL, ALSL…MGRT, LALR…GAGF, LLII…VIGH, and YTSV…LFLL.

Belongs to the AAE transporter (TC 2.A.81) family.

The protein resides in the cell membrane. This is an uncharacterized protein from Corynebacterium efficiens (strain DSM 44549 / YS-314 / AJ 12310 / JCM 11189 / NBRC 100395).